We begin with the raw amino-acid sequence, 87 residues long: Small ribosomal subunit protein bS20 (87 aa).

Residues 1-11 show a composition bias toward basic residues; that stretch reads MAHHKSAIKRI. The interval 1-26 is disordered; sequence MAHHKSAIKRIKQNEKRNARNRHQKS.

It belongs to the bacterial ribosomal protein bS20 family.

In terms of biological role, binds directly to 16S ribosomal RNA. This is Small ribosomal subunit protein bS20 from Trichlorobacter lovleyi (strain ATCC BAA-1151 / DSM 17278 / SZ) (Geobacter lovleyi).